The following is a 201-amino-acid chain: Molybdenum cofactor guanylyltransferase (201 aa).

GTP-binding positions include 14-16 (LAG), K31, and D104. D104 is a binding site for Mg(2+).

This sequence belongs to the MobA family. As to quaternary structure, monomer. It depends on Mg(2+) as a cofactor.

It localises to the cytoplasm. The enzyme catalyses Mo-molybdopterin + GTP + H(+) = Mo-molybdopterin guanine dinucleotide + diphosphate. Transfers a GMP moiety from GTP to Mo-molybdopterin (Mo-MPT) cofactor (Moco or molybdenum cofactor) to form Mo-molybdopterin guanine dinucleotide (Mo-MGD) cofactor. The protein is Molybdenum cofactor guanylyltransferase of Helicobacter pylori (strain ATCC 700392 / 26695) (Campylobacter pylori).